The following is a 417-amino-acid chain: Phosphoglycerate kinase (417 aa).

14 residues coordinate (2R)-3-phosphoglycerate: Val-23, Asp-24, Phe-25, Asn-26, Gln-39, Arg-40, Ser-63, His-64, Gly-66, Arg-67, Leu-122, Arg-123, His-170, and Arg-171. An ADP-binding site is contributed by Gly-214. A CDP-binding site is contributed by Gly-214. AMP is bound by residues Ala-215 and Lys-216. Ala-215 contacts ATP. Position 215 (Ala-215) interacts with Mg(2+). Asp-219 is a binding site for CDP. Asp-219 is a Mg(2+) binding site. Residue Lys-220 participates in AMP binding. ATP is bound at residue Lys-220. Gly-238 provides a ligand contact to ADP. Gly-238 contributes to the CDP binding site. AMP contacts are provided by Gly-239 and Gly-313. Residues Gly-239 and Gly-313 each coordinate ATP. CDP contacts are provided by Gly-338, Ala-340, and Phe-343. Phe-343 is an ADP binding site. An AMP-binding site is contributed by Glu-344. ATP contacts are provided by Glu-344, Asp-375, and Thr-376. Position 375 (Asp-375) interacts with Mg(2+).

Belongs to the phosphoglycerate kinase family. In terms of assembly, monomer. Mg(2+) is required as a cofactor.

It localises to the cytoplasm. Its subcellular location is the mitochondrion. The catalysed reaction is (2R)-3-phosphoglycerate + ATP = (2R)-3-phospho-glyceroyl phosphate + ADP. Its pathway is carbohydrate degradation; glycolysis; pyruvate from D-glyceraldehyde 3-phosphate: step 2/5. Catalyzes one of the two ATP producing reactions in the glycolytic pathway via the reversible conversion of 1,3-diphosphoglycerate to 3-phosphoglycerate. Both L- and D- forms of purine and pyrimidine nucleotides can be used as substrates, but the activity is much lower on pyrimidines. Negatively regulates the biosynthesis of acetyl-CoA from pyruvate in the mitochondrion. In Hypocrea rufa (Trichoderma viride), this protein is Phosphoglycerate kinase (pgk1).